The following is a 674-amino-acid chain: Probable nucleolar GTP-binding protein 1 (674 aa).

One can recognise an OBG-type G domain in the interval Arg169 to Phe346. GTP contacts are provided by residues Gly175–Ser182, Asp221–Ile225, and Asn289–Asp292. The span at Arg518–Ser527 shows a compositional bias: basic and acidic residues. 2 disordered regions span residues Arg518–Ile538 and Val564–Arg674. Over residues Ser570 to Ser580 the composition is skewed to basic residues. 2 stretches are compositionally biased toward basic and acidic residues: residues Gly619–Asp633 and Asn641–Val653.

It belongs to the TRAFAC class OBG-HflX-like GTPase superfamily. OBG GTPase family. NOG subfamily.

Its subcellular location is the nucleus. The protein resides in the nucleolus. Functionally, involved in the biogenesis of the 60S ribosomal subunit. This is Probable nucleolar GTP-binding protein 1 (nog1) from Dictyostelium discoideum (Social amoeba).